The sequence spans 76 residues: Theta defensin subunit C (76 aa).

The first 22 residues, 1–22 (MRTFAFLTAMLLLVALHAQAEA), serve as a signal peptide directing secretion. A propeptide spanning residues 23–64 (RQARADEAAIQEQPGADDQGMAHSFTRNESAVLPLSESERGL) is cleaved from the precursor. Arg65 is covalently cross-linked (Cyclopeptide (Arg-Cys) (interchain with C-73 in subunit A); in form BTD-4). The cysteines at positions 68 and 73 are disulfide-linked. Cys73 participates in a covalent cross-link: Cyclopeptide (Cys-Arg) (interchain with R-65 in subunit A); in form BTD-4. A propeptide spanning residues 74 to 76 (RLL) is cleaved from the precursor.

Belongs to the alpha-defensin family. Theta subfamily. In terms of assembly, BTD-4 is a cyclic heterodimer composed of subunits A and C; disulfide-linked. Forms a cyclic peptide with subunit A (BTD-4). An additional intersubunit disulfide bond is formed.

Its function is as follows. BTD-4 has antimicrobial activity against the Gram-negative bacterium E.coli ML35, the Gram-positive bacterium S.aureus 502a, and the fungus C.albicans 16820. This Papio anubis (Olive baboon) protein is Theta defensin subunit C (BTDC).